The chain runs to 536 residues: Phosphoenolpyruvate carboxykinase (ATP) (536 aa).

Substrate-binding residues include R62, Y203, and K209. Residues K209, H228, and G244–T252 each bind ATP. Mn(2+)-binding residues include K209 and H228. A Mn(2+)-binding site is contributed by D265. Residues E293, R329, R445–I446, and T451 each bind ATP. R329 is a substrate binding site.

Belongs to the phosphoenolpyruvate carboxykinase (ATP) family. As to quaternary structure, monomer. The cofactor is Mn(2+).

The protein resides in the cytoplasm. The catalysed reaction is oxaloacetate + ATP = phosphoenolpyruvate + ADP + CO2. The protein operates within carbohydrate biosynthesis; gluconeogenesis. In terms of biological role, involved in the gluconeogenesis. Catalyzes the conversion of oxaloacetate (OAA) to phosphoenolpyruvate (PEP) through direct phosphoryl transfer between the nucleoside triphosphate and OAA. In Actinobacillus pleuropneumoniae serotype 7 (strain AP76), this protein is Phosphoenolpyruvate carboxykinase (ATP).